A 97-amino-acid polypeptide reads, in one-letter code: Putative CC-type chemokine U83 (97 aa).

2 cysteine pairs are disulfide-bonded: C32–C62 and C33–C76.

It belongs to the intercrine beta (chemokine CC) family. Highly divergent.

The sequence is that of Putative CC-type chemokine U83 (U83) from Homo sapiens (Human).